A 332-amino-acid chain; its full sequence is Ribosomal RNA-processing protein 8 (332 aa).

A disordered region spans residues 1–109; it reads MGKKRINEVS…EVEKKNEEGD (109 aa). Composition is skewed to basic residues over residues 38–53 and 82–94; these read KKKK…KLAA and KKKK…KKKY. The segment covering 95-109 has biased composition (basic and acidic residues); that stretch reads KPEAAEVEKKNEEGD. Residues H158, G193, D213, D225, M226, and C242 each contribute to the S-adenosyl-L-methionine site.

It belongs to the methyltransferase superfamily. RRP8 family.

Its subcellular location is the nucleus. It is found in the nucleolus. Its function is as follows. Probable methyltransferase required to silence rDNA. The chain is Ribosomal RNA-processing protein 8 (rrp-8) from Caenorhabditis briggsae.